We begin with the raw amino-acid sequence, 688 residues long: Protein adenylyltransferase SelO, mitochondrial (688 aa).

Residues 1 to 23 constitute a mitochondrion transit peptide; the sequence is MGEKRTIIKALKNSAASHFIKKL. ATP-binding residues include glycine 132, glycine 134, arginine 135, lysine 156, aspartate 168, glycine 169, arginine 220, and arginine 227. The Proton acceptor role is filled by aspartate 338. Positions 339 and 348 each coordinate Mg(2+). Aspartate 348 contacts ATP.

Belongs to the SELO family. Mg(2+) is required as a cofactor. Post-translationally, forms probably one or more intrachain disulfide bridges.

Its subcellular location is the mitochondrion. It carries out the reaction L-tyrosyl-[protein] + ATP = O-(5'-adenylyl)-L-tyrosyl-[protein] + diphosphate. Its function is as follows. Catalyzes the transfer of adenosine 5'-monophosphate (AMP) to Tyr residues of target mitochondrial proteins (AMPylation). Involved in redox homeostasis by regulating the cellular response to oxidative stress. Regulates protein S-glutathionylation levels possibly by AMPylation of deglutathionylation enzymes such as glutaredoxins. The chain is Protein adenylyltransferase SelO, mitochondrial from Saccharomyces cerevisiae (strain ATCC 204508 / S288c) (Baker's yeast).